The chain runs to 837 residues: PE-PGRS family protein PE_PGRS4 (837 aa).

One can recognise a PE domain in the interval 4–94; it reads VIAAPEVIAA…GAYAAAEAAA (91 aa). Gly residues predominate over residues 811 to 825; sequence NGGKAGGTPGAGGTS. A disordered region spans residues 811-837; the sequence is NGGKAGGTPGAGGTSGLIIGENGLNGL. Residues 826-837 show a composition bias toward low complexity; sequence GLIIGENGLNGL.

It belongs to the mycobacterial PE family. PGRS subfamily.

This is PE-PGRS family protein PE_PGRS4 from Mycobacterium tuberculosis (strain ATCC 25618 / H37Rv).